Reading from the N-terminus, the 220-residue chain is 5'(3')-deoxyribonucleotidase, mitochondrial (220 aa).

The N-terminal 23 residues, 1 to 23 (MHRLRGCCARPRGAPLRAERSRA), are a transit peptide targeting the mitochondrion. D33 acts as the Nucleophile in catalysis. Positions 33 and 35 each coordinate Mg(2+). The active-site Proton donor is D35. Substrate contacts are provided by D35, F41, F67, W68, V69, W88, T122, and K157. Residue D168 coordinates Mg(2+).

This sequence belongs to the 5'(3')-deoxyribonucleotidase family. As to quaternary structure, homodimer. The cofactor is Mg(2+).

The protein resides in the mitochondrion. In terms of biological role, dephosphorylates specifically the 5' and 2'(3')-phosphates of uracil and thymine deoxyribonucleotides, and so protects mitochondrial DNA replication from excess dTTP. Has only marginal activity towards dIMP and dGMP. The chain is 5'(3')-deoxyribonucleotidase, mitochondrial (Nt5m) from Mus musculus (Mouse).